A 450-amino-acid chain; its full sequence is Glucose-6-phosphate isomerase (450 aa).

Thr39 carries the phosphothreonine modification. Glu291 functions as the Proton donor in the catalytic mechanism. Active-site residues include His312 and Lys426.

It belongs to the GPI family.

Its subcellular location is the cytoplasm. The enzyme catalyses alpha-D-glucose 6-phosphate = beta-D-fructose 6-phosphate. Its pathway is carbohydrate biosynthesis; gluconeogenesis. The protein operates within carbohydrate degradation; glycolysis; D-glyceraldehyde 3-phosphate and glycerone phosphate from D-glucose: step 2/4. In terms of biological role, catalyzes the reversible isomerization of glucose-6-phosphate to fructose-6-phosphate. The chain is Glucose-6-phosphate isomerase from Bacillus mycoides (strain KBAB4) (Bacillus weihenstephanensis).